The following is a 205-amino-acid chain: Pyrrolidone-carboxylate peptidase (205 aa).

Residues Glu-78, Cys-141, and His-165 contribute to the active site.

It belongs to the peptidase C15 family. In terms of assembly, homotetramer.

Its subcellular location is the cytoplasm. The catalysed reaction is Release of an N-terminal pyroglutamyl group from a polypeptide, the second amino acid generally not being Pro.. In terms of biological role, removes 5-oxoproline from various penultimate amino acid residues except L-proline. In Thermosipho africanus (strain TCF52B), this protein is Pyrrolidone-carboxylate peptidase.